A 157-amino-acid chain; its full sequence is Protein Smg homolog (157 aa).

The protein belongs to the Smg family.

The polypeptide is Protein Smg homolog (Aeromonas salmonicida (strain A449)).